The chain runs to 511 residues: Zinc finger CCCH-type with G patch domain-containing protein (511 aa).

The C3H1-type zinc finger occupies 157-180; it reads PCSYYLEGECRFDEARCRYSHGAL. A disordered region spans residues 254-281; that stretch reads DQEDELTSEDSSSVNDGSSDEEESDMDD. The segment covering 271–281 has biased composition (acidic residues); sequence SSDEEESDMDD. Residues 311–357 form the G-patch domain; the sequence is TRGIGSKLMEKMGYIHGTGLGSDGRGIVTPVSAQILPKGRSLDACME. Disordered regions lie at residues 409 to 433 and 478 to 511; these read GSDNKQQAEPEAKKAKANDLQQHST and MHNQKQELATLQAQERSLSKEQQTRKSKNKMFEF. Over residues 414-425 the composition is skewed to basic and acidic residues; sequence QQAEPEAKKAKA. Positions 478 to 493 are enriched in polar residues; it reads MHNQKQELATLQAQER. Residues 494-511 are compositionally biased toward basic and acidic residues; the sequence is SLSKEQQTRKSKNKMFEF.

The protein resides in the nucleus. Functionally, transcription repressor. This is Zinc finger CCCH-type with G patch domain-containing protein from Drosophila ananassae (Fruit fly).